The following is a 96-amino-acid chain: Large ribosomal subunit protein uL23 (96 aa).

This sequence belongs to the universal ribosomal protein uL23 family. Part of the 50S ribosomal subunit. Contacts protein L29, and trigger factor when it is bound to the ribosome.

Its function is as follows. One of the early assembly proteins it binds 23S rRNA. One of the proteins that surrounds the polypeptide exit tunnel on the outside of the ribosome. Forms the main docking site for trigger factor binding to the ribosome. The protein is Large ribosomal subunit protein uL23 of Desulfovibrio desulfuricans (strain ATCC 27774 / DSM 6949 / MB).